The sequence spans 457 residues: tRNA-2-methylthio-N(6)-dimethylallyladenosine synthase (457 aa).

The MTTase N-terminal domain maps to K3–T120. [4Fe-4S] cluster is bound by residues C12, C49, C83, C157, C161, and C164. Residues R143–R377 form the Radical SAM core domain. One can recognise a TRAM domain in the interval Q380 to L447.

The protein belongs to the methylthiotransferase family. MiaB subfamily. In terms of assembly, monomer. The cofactor is [4Fe-4S] cluster.

It is found in the cytoplasm. It carries out the reaction N(6)-dimethylallyladenosine(37) in tRNA + (sulfur carrier)-SH + AH2 + 2 S-adenosyl-L-methionine = 2-methylsulfanyl-N(6)-dimethylallyladenosine(37) in tRNA + (sulfur carrier)-H + 5'-deoxyadenosine + L-methionine + A + S-adenosyl-L-homocysteine + 2 H(+). Functionally, catalyzes the methylthiolation of N6-(dimethylallyl)adenosine (i(6)A), leading to the formation of 2-methylthio-N6-(dimethylallyl)adenosine (ms(2)i(6)A) at position 37 in tRNAs that read codons beginning with uridine. This Burkholderia multivorans (strain ATCC 17616 / 249) protein is tRNA-2-methylthio-N(6)-dimethylallyladenosine synthase.